The primary structure comprises 248 residues: Probable transcriptional regulatory protein Pcar_2335 (248 aa).

It belongs to the TACO1 family.

Its subcellular location is the cytoplasm. The protein is Probable transcriptional regulatory protein Pcar_2335 of Syntrophotalea carbinolica (strain DSM 2380 / NBRC 103641 / GraBd1) (Pelobacter carbinolicus).